A 421-amino-acid chain; its full sequence is Serine--tRNA ligase (421 aa).

225 to 227 (TAE) serves as a coordination point for L-serine. ATP is bound by residues 256-258 (RSE) and Val-272. Glu-279 provides a ligand contact to L-serine. 345–348 (ETHS) contacts ATP. Thr-380 is an L-serine binding site.

The protein belongs to the class-II aminoacyl-tRNA synthetase family. Type-1 seryl-tRNA synthetase subfamily. As to quaternary structure, homodimer. The tRNA molecule binds across the dimer.

It localises to the cytoplasm. The enzyme catalyses tRNA(Ser) + L-serine + ATP = L-seryl-tRNA(Ser) + AMP + diphosphate + H(+). It catalyses the reaction tRNA(Sec) + L-serine + ATP = L-seryl-tRNA(Sec) + AMP + diphosphate + H(+). It functions in the pathway aminoacyl-tRNA biosynthesis; selenocysteinyl-tRNA(Sec) biosynthesis; L-seryl-tRNA(Sec) from L-serine and tRNA(Sec): step 1/1. Its function is as follows. Catalyzes the attachment of serine to tRNA(Ser). Is also able to aminoacylate tRNA(Sec) with serine, to form the misacylated tRNA L-seryl-tRNA(Sec), which will be further converted into selenocysteinyl-tRNA(Sec). The chain is Serine--tRNA ligase from Thermus thermophilus (strain ATCC 27634 / DSM 579 / HB8).